The primary structure comprises 653 residues: Beta-galactosidase (653 aa).

The first 22 residues, 1–22 (MPGVVRLLALLLVPLLLGSARG), serve as a signal peptide directing secretion. The propeptide occupies 23–27 (LHNAT). Asparagine 25 carries N-linked (GlcNAc...) asparagine glycosylation. Residue tyrosine 82 participates in substrate binding. Asparagine 96 carries N-linked (GlcNAc...) asparagine glycosylation. Substrate is bound by residues glutamate 128 and asparagine 186. Glutamate 187 functions as the Proton donor in the catalytic mechanism. Residues cysteine 194 and cysteine 229 are joined by a disulfide bond. N-linked (GlcNAc...) asparagine glycosylation occurs at asparagine 246. Glutamate 267 acts as the Nucleophile in catalysis. A substrate-binding site is contributed by tyrosine 332. Asparagine 463, asparagine 497, and asparagine 554 each carry an N-linked (GlcNAc...) asparagine glycan. A disulfide bridge links cysteine 625 with cysteine 633.

This sequence belongs to the glycosyl hydrolase 35 family. As to quaternary structure, homodimer. May form higher multimers.

It is found in the lysosome. It catalyses the reaction Hydrolysis of terminal non-reducing beta-D-galactose residues in beta-D-galactosides.. Cleaves beta-linked terminal galactosyl residues from gangliosides, glycoproteins, and glycosaminoglycans. The chain is Beta-galactosidase (GLB1) from Bos taurus (Bovine).